Consider the following 458-residue polypeptide: Protein amnionless (458 aa).

A signal peptide spans 1-19 (MGALGRALLWLQLCALARA). The Extracellular portion of the chain corresponds to 20–366 (AYKLWVPTTD…LGSGSRAGLA (347 aa)). A glycan (N-linked (GlcNAc...) asparagine) is linked at N35. Disulfide bonds link C43-C96, C137-C213, C205-C211, C223-C249, C234-C250, and C239-C253. The interval 67–87 (SDMLLPRDGEFVLASGAGFGA) is interaction with CUBN. The 52-residue stretch at 203–254 (GACADPSGCVCGDAEVQPWICAALLQPLGGRCPPAACPDALRPEGQCCDLCG) folds into the VWFC domain. The helical transmembrane segment at 367-387 (GGVAAGLLLLLLALAAGLLLL) threads the bilayer. Residues 388 to 458 (RRAPRLRWTK…VNPLFAEAEA (71 aa)) are Cytoplasmic-facing. Residues 422–446 (SVGPVPRTPQPPPAQQAGSSSTSRS) form a disordered region.

As to quaternary structure, interacts (via extracellular region) with CUBN/cubilin. This gives rise to a huge complex containing one AMN chain and three CUBN chains. N-glycosylated. Post-translationally, a soluble form arises by proteolytic removal of the membrane anchor. As to expression, detected in kidney (at protein level). Detected in kidney and ileum.

The protein localises to the apical cell membrane. Its subcellular location is the cell membrane. It is found in the endosome membrane. It localises to the membrane. The protein resides in the coated pit. The protein localises to the secreted. Its function is as follows. Membrane-bound component of the endocytic receptor formed by AMN and CUBN. Required for normal CUBN glycosylation and trafficking to the cell surface. The complex formed by AMN and CUBN is required for efficient absorption of vitamin B12. Required for normal CUBN-mediated protein transport in the kidney. The protein is Protein amnionless (AMN) of Canis lupus familiaris (Dog).